Here is a 111-residue protein sequence, read N- to C-terminus: MFKATARYIRVQPRKARLAAGLMRNLSVMEAQKQLSFSQLKAGRCLKKVLDSAVANAELNENVKREQLNVIEVRVDAGPVYKRTKSKSRGGRSPILKRTSHLTVIVGERER.

The protein belongs to the universal ribosomal protein uL22 family. In terms of assembly, part of the 50S ribosomal subunit.

In terms of biological role, this protein binds specifically to 23S rRNA; its binding is stimulated by other ribosomal proteins, e.g. L4, L17, and L20. It is important during the early stages of 50S assembly. It makes multiple contacts with different domains of the 23S rRNA in the assembled 50S subunit and ribosome. Functionally, the globular domain of the protein is located near the polypeptide exit tunnel on the outside of the subunit, while an extended beta-hairpin is found that lines the wall of the exit tunnel in the center of the 70S ribosome. The chain is Large ribosomal subunit protein uL22 from Chlamydia felis (strain Fe/C-56) (Chlamydophila felis).